The following is a 315-amino-acid chain: ATP synthase gamma chain (315 aa).

This sequence belongs to the ATPase gamma chain family. F-type ATPases have 2 components, CF(1) - the catalytic core - and CF(0) - the membrane proton channel. CF(1) has five subunits: alpha(3), beta(3), gamma(1), delta(1), epsilon(1). CF(0) has three main subunits: a, b and c.

The protein localises to the cellular thylakoid membrane. Produces ATP from ADP in the presence of a proton gradient across the membrane. The gamma chain is believed to be important in regulating ATPase activity and the flow of protons through the CF(0) complex. This Nostoc punctiforme (strain ATCC 29133 / PCC 73102) protein is ATP synthase gamma chain.